The chain runs to 427 residues: Glutamate-1-semialdehyde 2,1-aminomutase (427 aa).

Position 265 is an N6-(pyridoxal phosphate)lysine (K265).

Belongs to the class-III pyridoxal-phosphate-dependent aminotransferase family. HemL subfamily. In terms of assembly, homodimer. Pyridoxal 5'-phosphate serves as cofactor.

It localises to the cytoplasm. It carries out the reaction (S)-4-amino-5-oxopentanoate = 5-aminolevulinate. It participates in porphyrin-containing compound metabolism; protoporphyrin-IX biosynthesis; 5-aminolevulinate from L-glutamyl-tRNA(Glu): step 2/2. This Burkholderia cenocepacia (strain ATCC BAA-245 / DSM 16553 / LMG 16656 / NCTC 13227 / J2315 / CF5610) (Burkholderia cepacia (strain J2315)) protein is Glutamate-1-semialdehyde 2,1-aminomutase.